The chain runs to 338 residues: Ketol-acid reductoisomerase (NADP(+)) (338 aa).

The KARI N-terminal Rossmann domain occupies 1 to 181 (MKVFYDKDCD…GGGRAGIIET (181 aa)). NADP(+) is bound by residues 24 to 27 (YGSQ), arginine 47, and serine 52. Histidine 107 is an active-site residue. NADP(+) is bound at residue glycine 133. Residues 182-327 (NFREETETDL…AKLRAMMPWI (146 aa)) enclose the KARI C-terminal knotted domain. Mg(2+) is bound by residues aspartate 190, glutamate 194, glutamate 226, and glutamate 230. Residue serine 251 coordinates substrate.

It belongs to the ketol-acid reductoisomerase family. Mg(2+) is required as a cofactor.

The enzyme catalyses (2R)-2,3-dihydroxy-3-methylbutanoate + NADP(+) = (2S)-2-acetolactate + NADPH + H(+). It catalyses the reaction (2R,3R)-2,3-dihydroxy-3-methylpentanoate + NADP(+) = (S)-2-ethyl-2-hydroxy-3-oxobutanoate + NADPH + H(+). The protein operates within amino-acid biosynthesis; L-isoleucine biosynthesis; L-isoleucine from 2-oxobutanoate: step 2/4. It participates in amino-acid biosynthesis; L-valine biosynthesis; L-valine from pyruvate: step 2/4. In terms of biological role, involved in the biosynthesis of branched-chain amino acids (BCAA). Catalyzes an alkyl-migration followed by a ketol-acid reduction of (S)-2-acetolactate (S2AL) to yield (R)-2,3-dihydroxy-isovalerate. In the isomerase reaction, S2AL is rearranged via a Mg-dependent methyl migration to produce 3-hydroxy-3-methyl-2-ketobutyrate (HMKB). In the reductase reaction, this 2-ketoacid undergoes a metal-dependent reduction by NADPH to yield (R)-2,3-dihydroxy-isovalerate. This is Ketol-acid reductoisomerase (NADP(+)) from Herminiimonas arsenicoxydans.